The sequence spans 297 residues: 4-hydroxybenzoate octaprenyltransferase (297 aa).

Transmembrane regions (helical) follow at residues 29 to 49 (IGTY…AEGV), 55 to 75 (LFIF…VNDF), 102 to 122 (AWTL…LTNA), 124 to 141 (TVYL…YPFM), 146 to 166 (FYPQ…AFTA), 169 to 189 (GSLP…TVAY), 219 to 239 (VIIV…GVRF), 241 to 261 (LGQW…WEFW), and 270 to 290 (VCFK…AGIV).

It belongs to the UbiA prenyltransferase family. Mg(2+) is required as a cofactor.

It localises to the cell inner membrane. The enzyme catalyses all-trans-octaprenyl diphosphate + 4-hydroxybenzoate = 4-hydroxy-3-(all-trans-octaprenyl)benzoate + diphosphate. The protein operates within cofactor biosynthesis; ubiquinone biosynthesis. Catalyzes the prenylation of para-hydroxybenzoate (PHB) with an all-trans polyprenyl group. Mediates the second step in the final reaction sequence of ubiquinone-8 (UQ-8) biosynthesis, which is the condensation of the polyisoprenoid side chain with PHB, generating the first membrane-bound Q intermediate 3-octaprenyl-4-hydroxybenzoate. This chain is 4-hydroxybenzoate octaprenyltransferase, found in Stutzerimonas stutzeri (strain A1501) (Pseudomonas stutzeri).